The sequence spans 198 residues: Endonuclease V (198 aa).

Positions 38 and 101 each coordinate Mg(2+).

This sequence belongs to the endonuclease V family. Mg(2+) is required as a cofactor.

It localises to the cytoplasm. It catalyses the reaction Endonucleolytic cleavage at apurinic or apyrimidinic sites to products with a 5'-phosphate.. Its function is as follows. DNA repair enzyme involved in the repair of deaminated bases. Selectively cleaves double-stranded DNA at the second phosphodiester bond 3' to a deoxyinosine leaving behind the intact lesion on the nicked DNA. This Saccharolobus islandicus (strain Y.N.15.51 / Yellowstone #2) (Sulfolobus islandicus) protein is Endonuclease V.